A 542-amino-acid chain; its full sequence is MRLDTNSNVDFKAFESSSSSSSCLVKLDNLATWGGSQKTDTRLPITDYSTLGGPRHNRSPFPLSKDVNNRLVIWDGDMTTLDVDAITNTSDETLTESNIISERILAVAGNQLREELSTNVKECRTGDVRITRGYNLPAKYVLHTVAPTYREKFKTAAENTLHCCYRNVLCKAKELNLHTIALCNISVHQKSFPADVAAHIALRTIRRYLDKCTLQVVILCVNSNERGTYEVLAPLYFPRDQLEERSALWQLPKDIGGEFGEPQHPDPDRQIRIIRNPQHSVHMRHGHTDDDSDVSPHDMEGNSSDLEYGAKDMNGLSPNSYSSGLQTQLQRDLDRQHLLSDRPRAGVYENVISEGVEGIEHQERYERLLRRAQVEDLTEVSGIGCLYQSGVDRLGRPVIVFCGKWFPAQNIDLEKALLYLIKLLDPIVKGDYVISYFHTLTSTNNYPSLHWLREVYSVLPYKYKKNLKAFYIVHPTFWTKMMTWWFTTFMAPAIKAKVHSLPGVEHLYSAITKDQLEIPAYITEYDMATNGLHYFNPVPTAS.

One can recognise a Macro domain in the interval 58–237 (RSPFPLSKDV…TYEVLAPLYF (180 aa)). Residues 277–304 (PQHSVHMRHGHTDDDSDVSPHDMEGNSS) are disordered. Basic and acidic residues predominate over residues 286-300 (GHTDDDSDVSPHDME). The region spanning 373–530 (QVEDLTEVSG…YITEYDMATN (158 aa)) is the CRAL-TRIO domain.

It belongs to the GDAP2 family.

The chain is Protein GDAP2 homolog from Drosophila pseudoobscura pseudoobscura (Fruit fly).